The chain runs to 434 residues: Histidinol dehydrogenase (434 aa).

NAD(+)-binding residues include Y130, Q188, and N211. Substrate contacts are provided by S237, Q259, and H262. Positions 259 and 262 each coordinate Zn(2+). Catalysis depends on proton acceptor residues E326 and H327. Residues H327, D360, E414, and H419 each coordinate substrate. D360 is a binding site for Zn(2+). Residue H419 participates in Zn(2+) binding.

The protein belongs to the histidinol dehydrogenase family. In terms of assembly, homodimer. It depends on Zn(2+) as a cofactor.

The catalysed reaction is L-histidinol + 2 NAD(+) + H2O = L-histidine + 2 NADH + 3 H(+). It functions in the pathway amino-acid biosynthesis; L-histidine biosynthesis; L-histidine from 5-phospho-alpha-D-ribose 1-diphosphate: step 9/9. In terms of biological role, catalyzes the sequential NAD-dependent oxidations of L-histidinol to L-histidinaldehyde and then to L-histidine. In Shigella flexneri, this protein is Histidinol dehydrogenase.